The primary structure comprises 347 residues: Dihydroorotase (347 aa).

The Zn(2+) site is built by H17 and H19. Substrate-binding positions include 19–21 and N45; that span reads HVR. Residues K102, H139, and H177 each coordinate Zn(2+). K102 carries the N6-carboxylysine modification. H139 provides a ligand contact to substrate. L222 contributes to the substrate binding site. A Zn(2+)-binding site is contributed by D250. The active site involves D250. The substrate site is built by H254 and A266.

The protein belongs to the metallo-dependent hydrolases superfamily. DHOase family. Class II DHOase subfamily. Homodimer. Requires Zn(2+) as cofactor.

It carries out the reaction (S)-dihydroorotate + H2O = N-carbamoyl-L-aspartate + H(+). The protein operates within pyrimidine metabolism; UMP biosynthesis via de novo pathway; (S)-dihydroorotate from bicarbonate: step 3/3. In terms of biological role, catalyzes the reversible cyclization of carbamoyl aspartate to dihydroorotate. The protein is Dihydroorotase of Acidovorax sp. (strain JS42).